We begin with the raw amino-acid sequence, 567 residues long: Vacuolar fusion protein MON1 homolog (567 aa).

2 disordered regions span residues 1-52 and 65-129; these read MDMD…DDEG and TSAS…DDTS. Positions 7 to 19 are enriched in pro residues; it reads TNNPSPPGPPDSP. The segment covering 43–52 has biased composition (acidic residues); the sequence is DDYDDDDDEG.

The protein belongs to the MON1/SAND family. In terms of assembly, interacts with CCZ1A, CCZ1B and RABF2B.

The protein resides in the endosome. It localises to the prevacuolar compartment. Functionally, plays an important role in membrane trafficking through the secretory apparatus. In complex with CCZ1, acts as a guanine exchange factor (GEF) for Rab7 protein family. Promotes the exchange of GDP to GTP, converting it from an inactive GDP-bound form into an active GTP-bound form. The active form is involved in protein trafficking from prevacuolar compartments (PVCs) to vacuoles. May serve as a linker between Rab5 and Rab7 protein families in PVCs and mediate PVC maturation. This is Vacuolar fusion protein MON1 homolog from Oryza sativa subsp. japonica (Rice).